A 148-amino-acid polypeptide reads, in one-letter code: MALYEHVLLARQDISQQQVDALVEQFKGVLEANGGKFGKVENWGLRPLTYRIKKNRKAYYTLVNIDAPAAAVAEMERQMRINEDVLRFLTVRVEEHEEGQSAMLTRRDDRRERDGDDRPRRREGGFDRGDRGDRGPRRPRDTEAGEGA.

The disordered stretch occupies residues 96 to 148 (HEEGQSAMLTRRDDRRERDGDDRPRRREGGFDRGDRGDRGPRRPRDTEAGEGA).

Belongs to the bacterial ribosomal protein bS6 family.

Binds together with bS18 to 16S ribosomal RNA. The chain is Small ribosomal subunit protein bS6 from Brucella canis (strain ATCC 23365 / NCTC 10854 / RM-666).